The primary structure comprises 122 residues: Large ribosomal subunit protein bL19 (122 aa).

The protein belongs to the bacterial ribosomal protein bL19 family.

In terms of biological role, this protein is located at the 30S-50S ribosomal subunit interface and may play a role in the structure and function of the aminoacyl-tRNA binding site. The chain is Large ribosomal subunit protein bL19 from Novosphingobium aromaticivorans (strain ATCC 700278 / DSM 12444 / CCUG 56034 / CIP 105152 / NBRC 16084 / F199).